The following is a 377-amino-acid chain: Peroxisomal membrane protein PEX14 (377 aa).

Positions 1–15 (MASSEQAEQPSQPSS) are enriched in low complexity. Positions 1–24 (MASSEQAEQPSQPSSTPGSENVLP) are disordered. A2 is subject to N-acetylalanine. Topologically, residues 2-108 (ASSEQAEQPS…YSPAGSRWRD (107 aa)) are peroxisomal matrix. K34 is modified (N6-acetyllysine). Residues 109-126 (YGALAIIMAGIAFGFHQL) traverse the membrane as a helical segment. Topologically, residues 127-377 (YKKYLLPLIL…EGASNESERD (251 aa)) are cytoplasmic. The segment at 230–377 (PPSPSAPKIP…EGASNESERD (148 aa)) is disordered. S232 is modified (phosphoserine). Low complexity-rich tracts occupy residues 244 to 259 (PVKS…VNHH) and 265 to 275 (SPVSNESTSSS). Phosphoserine is present on residues S282 and S335. Over residues 323–342 (KEDEEDEEDDDVSHVDEEDC) the composition is skewed to acidic residues. Positions 360–377 (QVEKLRRPEGASNESERD) are enriched in basic and acidic residues.

This sequence belongs to the peroxin-14 family. Interacts with PEX13; forming the PEX13-PEX14 docking complex. Interacts with PEX5 (via WxxxF/Y motifs). Interacts with PEX19. Interacts with tubulin.

The protein resides in the peroxisome membrane. Its function is as follows. Component of the PEX13-PEX14 docking complex, a translocon channel that specifically mediates the import of peroxisomal cargo proteins bound to PEX5 receptor. The PEX13-PEX14 docking complex forms a large import pore which can be opened to a diameter of about 9 nm. Mechanistically, PEX5 receptor along with cargo proteins associates with the PEX14 subunit of the PEX13-PEX14 docking complex in the cytosol, leading to the insertion of the receptor into the organelle membrane with the concomitant translocation of the cargo into the peroxisome matrix. Plays a key role for peroxisome movement through a direct interaction with tubulin. The sequence is that of Peroxisomal membrane protein PEX14 from Homo sapiens (Human).